A 428-amino-acid polypeptide reads, in one-letter code: Enolase (428 aa).

(2R)-2-phosphoglycerate is bound at residue Gln-165. The active-site Proton donor is Glu-207. Positions 244, 283, and 310 each coordinate Mg(2+). Residues Lys-335, Arg-364, Ser-365, and Lys-386 each contribute to the (2R)-2-phosphoglycerate site. Lys-335 functions as the Proton acceptor in the catalytic mechanism.

The protein belongs to the enolase family. It depends on Mg(2+) as a cofactor.

The protein resides in the cytoplasm. It is found in the secreted. Its subcellular location is the cell surface. The catalysed reaction is (2R)-2-phosphoglycerate = phosphoenolpyruvate + H2O. The protein operates within carbohydrate degradation; glycolysis; pyruvate from D-glyceraldehyde 3-phosphate: step 4/5. In terms of biological role, catalyzes the reversible conversion of 2-phosphoglycerate (2-PG) into phosphoenolpyruvate (PEP). It is essential for the degradation of carbohydrates via glycolysis. The protein is Enolase of Chlamydia pneumoniae (Chlamydophila pneumoniae).